A 211-amino-acid chain; its full sequence is Middle transcription regulatory protein motA (211 aa).

The segment at residues leucine 23–proline 42 is a DNA-binding region (H-T-H motif).

In terms of biological role, required for the transcriptional activation of middle promoters. Middle promoters are characterized by the presence of the conserved sequence [AT]3TGCTTNA (MotA box). MotA binds directly to MotA boxes. In Enterobacteria phage T4 (Bacteriophage T4), this protein is Middle transcription regulatory protein motA (motA).